We begin with the raw amino-acid sequence, 150 residues long: 3-dehydroquinate dehydratase (150 aa).

Tyrosine 23 (proton acceptor) is an active-site residue. Substrate contacts are provided by asparagine 79, histidine 85, and aspartate 92. The active-site Proton donor is the histidine 105. Substrate contacts are provided by residues 106–107 (IS) and arginine 116.

Belongs to the type-II 3-dehydroquinase family. In terms of assembly, homododecamer.

It carries out the reaction 3-dehydroquinate = 3-dehydroshikimate + H2O. It participates in metabolic intermediate biosynthesis; chorismate biosynthesis; chorismate from D-erythrose 4-phosphate and phosphoenolpyruvate: step 3/7. Functionally, catalyzes a trans-dehydration via an enolate intermediate. This is 3-dehydroquinate dehydratase from Marinomonas sp. (strain MWYL1).